Consider the following 187-residue polypeptide: Ribosome-recycling factor (187 aa).

The protein belongs to the RRF family.

The protein localises to the cytoplasm. Functionally, responsible for the release of ribosomes from messenger RNA at the termination of protein biosynthesis. May increase the efficiency of translation by recycling ribosomes from one round of translation to another. This chain is Ribosome-recycling factor, found in Orientia tsutsugamushi (strain Boryong) (Rickettsia tsutsugamushi).